Consider the following 333-residue polypeptide: MPDRSLPPAQRALFDALLDHGLSEWVARLPAQLADGLDRKRFGDLPAWEKAVAKLPTLPEARDVALDSDSVRVDLALTESQQRQCENLLRKLMPWRKGPYTLGGIHIDTEWRSDWKWQRVAPHLSPLEGRRVLDVGGGNGYHGWRMVGAGAAFVLIVDPSPRFYYQFQAVRHFVGDADGWRTHFLPVGIEAVPPKLEAFDTTFSMGVLYHRPSPLEHLMQLRDTLRPGGELVLETLVVEGDANTVFMPGERYAAMPNVYFLPSSKALAHWLERCGFEDVRVVDEAPTSLAEQRSTEWMTFHSLADFLDPEDATLTLEGYPAPRRAVLVARKPE.

Carboxy-S-adenosyl-L-methionine-binding positions include Lys-97, Trp-111, Lys-116, Gly-136, 158–160 (DPS), 189–190 (IE), Met-205, Tyr-209, and Arg-324.

This sequence belongs to the class I-like SAM-binding methyltransferase superfamily. CmoB family. In terms of assembly, homotetramer.

The catalysed reaction is carboxy-S-adenosyl-L-methionine + 5-hydroxyuridine(34) in tRNA = 5-carboxymethoxyuridine(34) in tRNA + S-adenosyl-L-homocysteine + H(+). Catalyzes carboxymethyl transfer from carboxy-S-adenosyl-L-methionine (Cx-SAM) to 5-hydroxyuridine (ho5U) to form 5-carboxymethoxyuridine (cmo5U) at position 34 in tRNAs. The sequence is that of tRNA U34 carboxymethyltransferase from Chromohalobacter salexigens (strain ATCC BAA-138 / DSM 3043 / CIP 106854 / NCIMB 13768 / 1H11).